A 329-amino-acid polypeptide reads, in one-letter code: Sex comb on midleg-like protein 1 (329 aa).

Residues Ser138 and Ser238 each carry the phosphoserine modification. Residues 258–325 enclose the SAM domain; it reads WSVEAVVLFL…YYIDRLKQGK (68 aa).

It belongs to the SCM family.

The protein resides in the nucleus. Putative Polycomb group (PcG) protein. PcG proteins act by forming multiprotein complexes, which are required to maintain the transcriptionally repressive state of homeotic genes throughout development. May be involved in spermatogenesis during sexual maturation. The chain is Sex comb on midleg-like protein 1 (SCML1) from Hoolock hoolock (Western hoolock gibbon).